Reading from the N-terminus, the 521-residue chain is Glucose-6-phosphate isomerase (521 aa).

Glutamate 327 (proton donor) is an active-site residue. Active-site residues include histidine 358 and lysine 486.

The protein belongs to the GPI family.

The protein localises to the cytoplasm. It catalyses the reaction alpha-D-glucose 6-phosphate = beta-D-fructose 6-phosphate. Its pathway is carbohydrate biosynthesis; gluconeogenesis. The protein operates within carbohydrate degradation; glycolysis; D-glyceraldehyde 3-phosphate and glycerone phosphate from D-glucose: step 2/4. Its function is as follows. Catalyzes the reversible isomerization of glucose-6-phosphate to fructose-6-phosphate. This is Glucose-6-phosphate isomerase from Bordetella petrii (strain ATCC BAA-461 / DSM 12804 / CCUG 43448).